Reading from the N-terminus, the 332-residue chain is Phospholipase A2 inhibitor beta (332 aa).

Positions 1 to 23 (MKSSVPSLLFVSLVMSLNSYTQQ) are cleaved as a signal peptide. N-linked (GlcNAc...) asparagine glycosylation occurs at N35. LRR repeat units follow at residues 78–101 (LPNLQELHLSNNRLKTLPSGLFRN), 103–125 (PELHTLDLSTNLLEDLPPEIFTS), 127–149 (TSLTLLSISENRLAKLRLSWFET), 150–173 (LKELRILSLDNNQLKEVPISCFDK), 175–197 (EKLTFLDLSSNHLHRLSPDMFSG), 198–221 (LDNLERLSLENNPIRCIAPKSFHG), 223–245 (PKLSIISLKNCSLTNIITGVFQP), and 247–269 (NHXVLLDLSDNELTMLDPPVAIP). Residue N232 is glycosylated (N-linked (GlcNAc...) asparagine). The N-linked (GlcNAc...) asparagine glycan is linked to N272. In terms of domain architecture, LRRCT spans 280 to 331 (NPWACNCRMDNLLTWVKEHKIDLYSKQEIVCAFPKSFKGEEATSLHRSQICP).

The protein belongs to the beta-type phospholipase A2 inhibitor family. Homotrimer.

It localises to the secreted. In terms of biological role, inhibits the enzymatic activity of the basic phospholipase A2 (PLA2). This Elaphe climacophora (Japanese rat snake) protein is Phospholipase A2 inhibitor beta.